A 495-amino-acid polypeptide reads, in one-letter code: Glucose-6-phosphate 1-dehydrogenase (495 aa).

NADP(+)-binding positions include 11-18 (GASGDLAK), R45, 84-85 (DV), and K147. Positions 177, 181, 215, and 234 each coordinate substrate. The active-site Proton acceptor is the H239. 2 residues coordinate substrate: K339 and K344.

It belongs to the glucose-6-phosphate dehydrogenase family.

It catalyses the reaction D-glucose 6-phosphate + NADP(+) = 6-phospho-D-glucono-1,5-lactone + NADPH + H(+). Its pathway is carbohydrate degradation; pentose phosphate pathway; D-ribulose 5-phosphate from D-glucose 6-phosphate (oxidative stage): step 1/3. Catalyzes the oxidation of glucose 6-phosphate to 6-phosphogluconolactone. This Streptococcus pneumoniae serotype 4 (strain ATCC BAA-334 / TIGR4) protein is Glucose-6-phosphate 1-dehydrogenase.